The chain runs to 113 residues: EVKLEESGGGLVQPGGSMKLSCVASGFTFSNYWMNWVRQSPEKGLEWVAEIRLKSHNYETHYAESVKGRFTISRDDSKSSVYLQMNILRAEDTGIYYCTTGFAYWGQGTLVTV.

In terms of domain architecture, Ig-like spans 1-113; it reads EVKLEESGGG…YWGQGTLVTV (113 aa). Residues C22 and C98 are joined by a disulfide bond.

The polypeptide is Ig heavy chain V-III region T957 (Mus musculus (Mouse)).